The following is a 140-amino-acid chain: ATP synthase epsilon chain (140 aa).

The protein belongs to the ATPase epsilon chain family. As to quaternary structure, F-type ATPases have 2 components, CF(1) - the catalytic core - and CF(0) - the membrane proton channel. CF(1) has five subunits: alpha(3), beta(3), gamma(1), delta(1), epsilon(1). CF(0) has three main subunits: a, b and c.

It is found in the cell inner membrane. In terms of biological role, produces ATP from ADP in the presence of a proton gradient across the membrane. The protein is ATP synthase epsilon chain of Stenotrophomonas maltophilia (strain R551-3).